We begin with the raw amino-acid sequence, 554 residues long: MKQRLRQYIGEALQACFDQQQLHSGTIPEINLEVPAHAEHGDFSTNVAMAMARAEKKAPRKIAETIVAALGEGGGMWSRVEIAGPGFINFYLTPRCWFGVLDEVVRRGDLFGRTHTGNGRKVQVEFVSANPTGPLHIGHGRGAATGDAVAAVLGAAGYEVQREYYINDAGNQMLTLGRSLLLRYRELLGETIEFPTDCYQGVYVIDLAREVLESEGERLRDLPEEEALRFFANYGGDKIRAGIDEDLAAFGVRFDNWYSEQSLYDRQEVERGIALLKERGLTYEKDGAIWFRTTDYGDDKDRVLIRSNGATTYFASDVAYHKEKFERGFDTVIDVWGADHHGYVPRMKAVLAGLDRNPEDLQIILVQLVNLLRGGQQVAMSTRSGEFVTLREVIDEVGRDACRFFFLMRRSDSQLDFDLDLAKKQSTENPVYYVQYAHARVCSINRNAEDQGVAMPELGEVDFDCLTLEDELALTKLLSRYPEVVDGAAEHFEPHRVVFYLQELAARFHSYYNKGRVLVDDPDVSRARLYLVNCVRTVLHNALVLLGVSAPERM.

The 'HIGH' region motif lies at 129–139 (ANPTGPLHIGH).

The protein belongs to the class-I aminoacyl-tRNA synthetase family. As to quaternary structure, monomer.

It is found in the cytoplasm. It carries out the reaction tRNA(Arg) + L-arginine + ATP = L-arginyl-tRNA(Arg) + AMP + diphosphate. The polypeptide is Arginine--tRNA ligase (Syntrophotalea carbinolica (strain DSM 2380 / NBRC 103641 / GraBd1) (Pelobacter carbinolicus)).